The primary structure comprises 417 residues: Cobalamin binding intrinsic factor (417 aa).

A signal peptide spans 1–22 (MAWFSLHLLHLLWAAAGTSTWA). 3 disulfide bridges follow: C26-C246, C103-C288, and C143-C182. N-linked (GlcNAc...) asparagine glycosylation occurs at N100. A cob(II)alamin-binding site is contributed by D171. Position 191 is a phosphoserine (S191). N209 carries an N-linked (GlcNAc...) asparagine glycan. Cob(II)alamin-binding residues include D222 and Q270. N-linked (GlcNAc...) asparagine glycans are attached at residues N311 and N330. Residues 365-370 (SWGLVV) and 386-395 (WQFLSGKTPL) contribute to the cob(II)alamin site. N-linked (GlcNAc...) asparagine glycosylation is present at N413.

This sequence belongs to the eukaryotic cobalamin transport proteins family. As to quaternary structure, interacts with CUBN (via CUB domains).

The protein localises to the secreted. In terms of biological role, promotes absorption of the essential vitamin cobalamin (Cbl) in the ileum. After interaction with CUBN, the CBLIF-cobalamin complex is internalized via receptor-mediated endocytosis. This Canis lupus familiaris (Dog) protein is Cobalamin binding intrinsic factor (CBLIF).